We begin with the raw amino-acid sequence, 274 residues long: 5'-3' exoribonuclease (274 aa).

Mn(2+) contacts are provided by His8, His10, Asp15, His40, Glu65, His76, His190, Asp247, and His249.

The protein belongs to the PHP family. TrpH/YciV subfamily. Requires Mn(2+) as cofactor.

The catalysed reaction is a ribonucleoside 3',5'-bisphosphate + H2O = a ribonucleoside 5'-phosphate + phosphate. Its function is as follows. Efficiently catalyzes the hydrolysis of the 3'-phosphate from 3',5'-bis-phosphonucleotides as well as the successive hydrolysis of 5'-phosphomononucleotides from the 5'-end of short pieces of RNA and DNA, with no specificity toward the identity of the nucleotide base. Is more efficient at hydrolyzing RNA oligonucleotides than DNA oligonucleotides. This enzyme can also hydrolyze annealed DNA duplexes, albeit at a catalytic efficiency lower than that of the corresponding single-stranded oligonucleotides. The polypeptide is 5'-3' exoribonuclease (Haemophilus influenzae (strain ATCC 51907 / DSM 11121 / KW20 / Rd)).